The primary structure comprises 349 residues: Sphingolipid C4-hydroxylase SUR2 (349 aa).

The next 5 helical transmembrane spans lie at 9-29 (AAGS…MHYA), 50-70 (VLAL…FHVI), 99-119 (FLEV…FMHF), 148-168 (IYYG…FLFV), and 209-229 (PVEG…LTHL). Positions 162–297 (FAGFLFVDTW…FTFWDNLFQT (136 aa)) constitute a Fatty acid hydroxylase domain.

It belongs to the sterol desaturase family.

It localises to the endoplasmic reticulum membrane. The catalysed reaction is sphinganine + 2 Fe(II)-[cytochrome b5] + O2 + 2 H(+) = (4R)-hydroxysphinganine + 2 Fe(III)-[cytochrome b5] + H2O. It catalyses the reaction an N-acylsphinganine + 2 Fe(II)-[cytochrome b5] + O2 + 2 H(+) = an N-acyl-(4R)-4-hydroxysphinganine + 2 Fe(III)-[cytochrome b5] + H2O. It carries out the reaction an N-acyleicosasphinganine + 2 Fe(II)-[cytochrome b5] + O2 + 2 H(+) = N-acyl-4-hydroxyeicosasphinganine + 2 Fe(III)-[cytochrome b5] + H2O. It participates in membrane lipid metabolism; sphingolipid biosynthesis. Functionally, required for hydroxylation of C-4 in the sphingoid moiety of ceramide. Catalyzes the conversion of sphinganine to phytosphingosine in sphingolipid biosynthesis. Involved in the response to syringomycin. This Saccharomyces cerevisiae (strain ATCC 204508 / S288c) (Baker's yeast) protein is Sphingolipid C4-hydroxylase SUR2 (SUR2).